The primary structure comprises 122 residues: Large-conductance mechanosensitive channel (122 aa).

2 consecutive transmembrane segments (helical) span residues 29–49 (FGKI…GLIF) and 66–86 (GVFI…FLFI).

The protein belongs to the MscL family. As to quaternary structure, homopentamer.

The protein resides in the cell membrane. Functionally, channel that opens in response to stretch forces in the membrane lipid bilayer. May participate in the regulation of osmotic pressure changes within the cell. The sequence is that of Large-conductance mechanosensitive channel from Macrococcus caseolyticus (strain JCSC5402) (Macrococcoides caseolyticum).